The primary structure comprises 686 residues: U3 small nucleolar RNA-associated protein 4 homolog (686 aa).

WD repeat units lie at residues 7–50 (HRVR…ANYF), 51–92 (QEKF…QALN), 93–135 (IKYA…PDKI), 136–181 (QFER…AVHK), 182–226 (MIVD…SATG), 227–275 (TLVK…SSEK), 276–317 (QWVR…LMEK), 318–377 (VEVK…PLSK), 378–427 (NADH…NISL), 428–475 (KRVS…KHLH), 476–516 (AFQP…VKQL), 517–566 (KLHC…WSRT), 567–627 (VQKQ…FPPT), and 628–666 (NESD…AVER). Lys321 is covalently cross-linked (Glycyl lysine isopeptide (Lys-Gly) (interchain with G-Cter in SUMO2)).

In terms of assembly, interacts with HIVEP1 Interacts with NOL11. Part of the small subunit (SSU) processome, composed of more than 70 proteins and the RNA chaperone small nucleolar RNA (snoRNA) U3. May be a component of the proposed t-UTP subcomplex of the ribosomal small subunit (SSU) processome containing at least UTP4, WDR43, HEATR1, UTP15, WDR75. Post-translationally, may be phosphorylated during mitosis; may control the association of this protein with WRD43 and UTP15.

It is found in the nucleus. The protein localises to the nucleolus. It localises to the chromosome. Functionally, ribosome biogenesis factor. Involved in nucleolar processing of pre-18S ribosomal RNA. Part of the small subunit (SSU) processome, first precursor of the small eukaryotic ribosomal subunit. During the assembly of the SSU processome in the nucleolus, many ribosome biogenesis factors, an RNA chaperone and ribosomal proteins associate with the nascent pre-rRNA and work in concert to generate RNA folding, modifications, rearrangements and cleavage as well as targeted d Involved in SSU pre-rRNA processing at sites A', A0, 1 and 2b. Required for optimal pre-ribosomal RNA transcription by RNA polymerase. May be a transcriptional regulator. In terms of biological role, (Microbial infection) Acts as a positive regulator of HIVEP1 which specifically binds to the DNA sequence 5'-GGGACTTTCC-3' found in enhancer elements of numerous viral promoters such as those of HIV-1, SV40, or CMV. The polypeptide is U3 small nucleolar RNA-associated protein 4 homolog (Homo sapiens (Human)).